Reading from the N-terminus, the 966-residue chain is Alanine--tRNA ligase (966 aa).

Zn(2+) contacts are provided by H646, H650, C750, and H754. Positions 927 to 949 are disordered; that stretch reads DRLGGGGGGRPSLASAGGRDPEA.

Belongs to the class-II aminoacyl-tRNA synthetase family. The cofactor is Zn(2+).

The protein resides in the cytoplasm. The enzyme catalyses tRNA(Ala) + L-alanine + ATP = L-alanyl-tRNA(Ala) + AMP + diphosphate. In terms of biological role, catalyzes the attachment of alanine to tRNA(Ala) in a two-step reaction: alanine is first activated by ATP to form Ala-AMP and then transferred to the acceptor end of tRNA(Ala). Also edits incorrectly charged Ser-tRNA(Ala) and Gly-tRNA(Ala) via its editing domain. This Salinibacter ruber (strain DSM 13855 / M31) protein is Alanine--tRNA ligase.